The sequence spans 154 residues: Myoglobin (154 aa).

The region spanning 2–148 (GLSDGEWQLV…FRNDMAAKYK (147 aa)) is the Globin domain. Ser4 carries the post-translational modification Phosphoserine. His65 provides a ligand contact to nitrite. His65 provides a ligand contact to O2. Thr68 carries the post-translational modification Phosphothreonine. His94 lines the heme b pocket.

It belongs to the globin family. Monomeric.

It localises to the cytoplasm. The protein resides in the sarcoplasm. It catalyses the reaction Fe(III)-heme b-[protein] + nitric oxide + H2O = Fe(II)-heme b-[protein] + nitrite + 2 H(+). The enzyme catalyses H2O2 + AH2 = A + 2 H2O. Functionally, monomeric heme protein which primary function is to store oxygen and facilitate its diffusion within muscle tissues. Reversibly binds oxygen through a pentacoordinated heme iron and enables its timely and efficient release as needed during periods of heightened demand. Depending on the oxidative conditions of tissues and cells, and in addition to its ability to bind oxygen, it also has a nitrite reductase activity whereby it regulates the production of bioactive nitric oxide. Under stress conditions, like hypoxia and anoxia, it also protects cells against reactive oxygen species thanks to its pseudoperoxidase activity. The chain is Myoglobin (MB) from Callithrix jacchus (White-tufted-ear marmoset).